Consider the following 449-residue polypeptide: Glycine--tRNA ligase (449 aa).

Positions 100 and 158 each coordinate substrate. ATP is bound by residues 190–192, 200–205, 275–276, and 319–322; these read RNE, FRVREF, EL, and GIER. 205 to 209 contributes to the substrate binding site; the sequence is FEQFE. Substrate is bound at residue 315 to 319; sequence EPSVG.

It belongs to the class-II aminoacyl-tRNA synthetase family. As to quaternary structure, homodimer.

The protein resides in the cytoplasm. The catalysed reaction is tRNA(Gly) + glycine + ATP = glycyl-tRNA(Gly) + AMP + diphosphate. In terms of biological role, catalyzes the attachment of glycine to tRNA(Gly). This chain is Glycine--tRNA ligase, found in Mycoplasma pneumoniae (strain ATCC 29342 / M129 / Subtype 1) (Mycoplasmoides pneumoniae).